The chain runs to 33 residues: U13-ctenitoxin-Pn1c (33 aa).

Disulfide bonds link C3-C17, C10-C21, and C16-C30.

Expressed by the venom gland.

The protein resides in the secreted. Functionally, acts as a neurotoxin. This is U13-ctenitoxin-Pn1c from Phoneutria nigriventer (Brazilian armed spider).